A 145-amino-acid chain; its full sequence is Large ribosomal subunit protein uL15 (145 aa).

Residues 1–43 are disordered; that stretch reads MRLNTIKPGAGSKSAAKRVGRGIGSGLGKTCGRGHKGQKSRAG. Residues 21–31 are compositionally biased toward gly residues; that stretch reads RGIGSGLGKTC.

Belongs to the universal ribosomal protein uL15 family. In terms of assembly, part of the 50S ribosomal subunit.

Binds to the 23S rRNA. The polypeptide is Large ribosomal subunit protein uL15 (Aromatoleum aromaticum (strain DSM 19018 / LMG 30748 / EbN1) (Azoarcus sp. (strain EbN1))).